We begin with the raw amino-acid sequence, 278 residues long: MTAAHKLTYGQRAARFTNPAAKALLETMERKKSNLSVSVDVVKSADLLAIVDTVGPYICLIKTHVDVVEDFDSSLVTKLQALAEKHDFLIFEDRKFADIGNTVALQYSSGVHKIASWSHITNAHPVPGPSIISGLASVGQPLGRGLLLLAEMSTKGSLATGAYTEAAVQMARENRGFVIGFIAQRRMDGIGAPPGVNVEDEDFLVLTPGVGLDVKGDGMGQQYRTPKQVVQEDGCDVIIVGRGIYGKDPSKVEEIRRQAERYQAAGWAAYIERVNALV.

Residues D40, 62-64 (KTH), 93-102 (DRKFADIGNT), Y223, and R242 each bind substrate. K95 serves as the catalytic Proton donor.

This sequence belongs to the OMP decarboxylase family.

The enzyme catalyses orotidine 5'-phosphate + H(+) = UMP + CO2. The protein operates within pyrimidine metabolism; UMP biosynthesis via de novo pathway; UMP from orotate: step 2/2. The sequence is that of Orotidine 5'-phosphate decarboxylase (URA1) from Schizophyllum commune (Split gill fungus).